The following is a 265-amino-acid chain: Anamorsin homolog (265 aa).

The tract at residues 1–147 (MDAAKMYGAV…WKIGSSFALK (147 aa)) is N-terminal SAM-like domain. The tract at residues 147 to 176 (KKVVKSSPKVQIDFDSDLIDENSLLSEEDL) is linker. [2Fe-2S] cluster contacts are provided by cysteine 186, cysteine 195, cysteine 198, and cysteine 200. The tract at residues 186-200 (CEIGPTRKACKNCSC) is fe-S binding site A. The [4Fe-4S] cluster site is built by cysteine 226, cysteine 229, cysteine 237, and cysteine 240. Short sequence motifs (cx2C motif) lie at residues 226–229 (CGSC) and 237–240 (CSTC). The tract at residues 226-240 (CGSCGLGDAFRCSTC) is fe-S binding site B.

It belongs to the anamorsin family. As to quaternary structure, monomer. [2Fe-2S] cluster is required as a cofactor. The cofactor is [4Fe-4S] cluster.

It localises to the cytoplasm. Its subcellular location is the mitochondrion intermembrane space. In terms of biological role, component of the cytosolic iron-sulfur (Fe-S) protein assembly (CIA) machinery. Required for the maturation of extramitochondrial Fe-S proteins. Part of an electron transfer chain functioning in an early step of cytosolic Fe-S biogenesis, facilitating the de novo assembly of a [4Fe-4S] cluster on the cytosolic Fe-S scaffold complex. Electrons are transferred from NADPH via a FAD- and FMN-containing diflavin oxidoreductase. Together with the diflavin oxidoreductase, also required for the assembly of the diferric tyrosyl radical cofactor of ribonucleotide reductase (RNR), probably by providing electrons for reduction during radical cofactor maturation in the catalytic small subunit. The sequence is that of Anamorsin homolog from Medicago truncatula (Barrel medic).